Here is a 56-residue protein sequence, read N- to C-terminus: Large ribosomal subunit protein bL33C (56 aa).

It belongs to the bacterial ribosomal protein bL33 family.

The chain is Large ribosomal subunit protein bL33C from Sorangium cellulosum (strain So ce56) (Polyangium cellulosum (strain So ce56)).